The sequence spans 270 residues: Carboxy-terminal domain RNA polymerase II polypeptide A small phosphatase 2 (270 aa).

Position 5 is a phosphoserine (Ser5). The FCP1 homology domain occupies 96–254 (QDQGRICVVI…LNLIPVFEEL (159 aa)). Asp106 serves as the catalytic 4-aspartylphosphate intermediate. Residues Asp106, Asp108, and Asn217 each coordinate Mg(2+). The Proton donor role is filled by Asp108.

As to quaternary structure, monomer. Interacts with REST. The cofactor is Mg(2+). Expression is restricted to non-neuronal tissues.

The protein localises to the nucleus. The enzyme catalyses O-phospho-L-seryl-[protein] + H2O = L-seryl-[protein] + phosphate. The catalysed reaction is O-phospho-L-threonyl-[protein] + H2O = L-threonyl-[protein] + phosphate. Functionally, preferentially catalyzes the dephosphorylation of 'Ser-5' within the tandem 7 residue repeats in the C-terminal domain (CTD) of the largest RNA polymerase II subunit POLR2A. Negatively regulates RNA polymerase II transcription, possibly by controlling the transition from initiation/capping to processive transcript elongation. Recruited by REST to neuronal genes that contain RE-1 elements, leading to neuronal gene silencing in non-neuronal cells. This chain is Carboxy-terminal domain RNA polymerase II polypeptide A small phosphatase 2 (Ctdsp2), found in Mus musculus (Mouse).